Here is a 106-residue protein sequence, read N- to C-terminus: Evasin P1168 (106 aa).

The signal sequence occupies residues 1 to 24; it reads MEVKISTFLQIAVLIVLGIHLIAA. 3 disulfide bridges follow: C45–C67, C49–C69, and C60–C80. N48, N54, and N64 each carry an N-linked (GlcNAc...) asparagine glycan.

The protein localises to the secreted. In terms of biological role, salivary chemokine-binding protein which binds to host chemokines CXCL1, CXCL2 and CXCL8. This Ixodes ricinus (Common tick) protein is Evasin P1168.